We begin with the raw amino-acid sequence, 77 residues long: Acyl carrier protein (77 aa).

One can recognise a Carrier domain in the interval Met-1–Glu-76. Ser-36 carries the post-translational modification O-(pantetheine 4'-phosphoryl)serine.

It belongs to the acyl carrier protein (ACP) family. 4'-phosphopantetheine is transferred from CoA to a specific serine of apo-ACP by AcpS. This modification is essential for activity because fatty acids are bound in thioester linkage to the sulfhydryl of the prosthetic group.

It is found in the cytoplasm. It participates in lipid metabolism; fatty acid biosynthesis. Carrier of the growing fatty acid chain in fatty acid biosynthesis. In Staphylococcus epidermidis (strain ATCC 12228 / FDA PCI 1200), this protein is Acyl carrier protein.